A 418-amino-acid chain; its full sequence is MMRMSWMVTVINRRMMKILIALALIAYIASVWGTYANMRSIQEHGEMKIEQRIDEAVGPLREKIRELELSFTQKYPPVKFLSEKDRKRILITGGAGFVGSHLTDKLMMDGHEVTVVDNFFTGRKRNVEHWIGHENFELINHDVVEPLYIEVDQIYHLASPASPPNYMYNPIKTLKTNTIGTLNMLGLAKRVGARLLLASTSEVYGDPEVHPQNEDYWGHVNPIGPRACYDEGKRVAETMCYAYMKQEGVEVRVARIFNTFGSRMHMNDGRVVSNFILQALQGEALTVYGSGSQTRAFQYVSDLVNGLVSLMNSNISSPVNLGNPEEHTILEFAQLIKSLVASRSHIQFLPEAQDDPQRRRPDIRKAKLLLGWEPVVPLEEGLNKTIQYFSRELEHQANNQYIPKPKAARMKKGRPRHN.

The Cytoplasmic segment spans residues 1 to 17; sequence MMRMSWMVTVINRRMMK. Residues 18–38 traverse the membrane as a helical; Signal-anchor for type II membrane protein segment; it reads ILIALALIAYIASVWGTYANM. At 39–418 the chain is on the lumenal side; the sequence is RSIQEHGEMK…RMKKGRPRHN (380 aa). Residues Gly-96, Phe-97, Val-98, Asp-117, Asn-118, Phe-120, Thr-121, Gly-122, Asp-142, and Val-143 each contribute to the NAD(+) site. Residues Leu-147 and Tyr-148 each contribute to the UDP-alpha-D-glucuronate site. NAD(+)-binding residues include Leu-157 and Ser-159. Residue Lys-175 coordinates UDP-alpha-D-glucuronate. Thr-176 serves as a coordination point for NAD(+). Residues Asn-183, Gly-186, Lys-189, and Arg-190 each coordinate UDP-alpha-D-glucuronate. Residues Ala-198, Tyr-229, and Lys-233 each coordinate NAD(+). The active-site Proton acceptor is the Tyr-229. Residues Tyr-243, Gln-246, and Glu-247 each contribute to the UDP-alpha-D-glucuronate site. 3 residues coordinate NAD(+): Thr-259, His-265, and Arg-270. 2 N-linked (GlcNAc...) asparagine glycosylation sites follow: Asn-314 and Asn-383. The interval 397 to 418 is disordered; the sequence is ANNQYIPKPKAARMKKGRPRHN. Basic residues predominate over residues 406–418; that stretch reads KAARMKKGRPRHN.

It belongs to the NAD(P)-dependent epimerase/dehydratase family. UDP-glucuronic acid decarboxylase subfamily. Homodimer and homotetramer. The cofactor is NAD(+).

It is found in the golgi apparatus. Its subcellular location is the golgi stack membrane. It catalyses the reaction UDP-alpha-D-glucuronate + H(+) = UDP-alpha-D-xylose + CO2. Its pathway is nucleotide-sugar biosynthesis; UDP-alpha-D-xylose biosynthesis; UDP-alpha-D-xylose from UDP-alpha-D-glucuronate: step 1/1. Catalyzes the NAD-dependent decarboxylation of UDP-glucuronic acid to UDP-xylose. Necessary for the biosynthesis of the core tetrasaccharide in glycosaminoglycan biosynthesis. Essential during embryogenesis for craniofacial development. In Danio rerio (Zebrafish), this protein is UDP-glucuronic acid decarboxylase 1.